The primary structure comprises 514 residues: Cardiolipin synthase 2 (514 aa).

The next 3 membrane-spanning stretches (helical) occupy residues 7–27 (LIFF…FIDV), 41–61 (ILGI…CVIF), and 71–91 (LTWL…YLLF). PLD phosphodiesterase domains lie at 249 to 276 (INYR…GDEY) and 427 to 454 (EKGF…DMRS). Active-site residues include histidine 254, lysine 256, aspartate 261, histidine 432, lysine 434, and aspartate 439.

This sequence belongs to the phospholipase D family. Cardiolipin synthase subfamily.

It is found in the cell membrane. It carries out the reaction 2 a 1,2-diacyl-sn-glycero-3-phospho-(1'-sn-glycerol) = a cardiolipin + glycerol. Its function is as follows. Catalyzes the reversible phosphatidyl group transfer from one phosphatidylglycerol molecule to another to form cardiolipin (CL) (diphosphatidylglycerol) and glycerol. This chain is Cardiolipin synthase 2 (cls2), found in Bacillus anthracis.